A 511-amino-acid polypeptide reads, in one-letter code: MINTDDNLLMIEALLTSDPSPPLLPANLSLETTLPKRLHAVLNGTHEPWSYAIFWKPSYDDFSGEAVLKWGDGVYTGGNEEKTRGRLRRKKTILSSPEEKERRSNVIRELNLMISGEAFPVVEDDVSDDDDVEVTDMEWFFLVSMTWSFGNGSGLAGKAFASYNPVLVTGSDLIYGSGCDRAKQGGDVGLQTILCIPSHNGVLELASTEEIRPNSDLFNRIRFLFGGSKYFSGAPNSNSELFPFQLESSCSSTVTGNPNPSPVYLQNRYNLNFSTSSSTLARAPCGDVLSFGENVKQSFENRNPNTYSDQIQNVVPHATVMLEKKKGKKRGRKPAHGRDKPLNHVEAERMRREKLNHRFYALRAVVPNVSKMDKTSLLEDAVCYINELKSKAENVELEKHAIEIQFNELKEIAGQRNAIPSVCKYEEKASEMMKIEVKIMESDDAMVRVESRKDHHPGARLMNALMDLELEVNHASISVMNDLMIQQANVKMGLRIYKQEELRDLLMSKIS.

Residues 339 to 388 (DKPLNHVEAERMRREKLNHRFYALRAVVPNVSKMDKTSLLEDAVCYINEL) enclose the bHLH domain.

Homodimer.

The protein localises to the nucleus. This Arabidopsis thaliana (Mouse-ear cress) protein is Transcription factor bHLH28 (BHLH28).